The sequence spans 680 residues: Pescadillo homolog (680 aa).

The segment at 315 to 336 (GEDEKPKAITNGEGESETPTDA) is disordered. One can recognise a BRCT domain in the interval 359–471 (DPSQLFANCT…ELKEPNQYAP (113 aa)). The tract at residues 494-680 (VPLEEQQTEA…ERKMAKGKAT (187 aa)) is disordered. Acidic residues-rich tracts occupy residues 511-530 (DVEDEEEADGAEADEDDDEA), 543-556 (GSDDDDDEEDEEAD), and 565-576 (AEVDDASEDDEQ). Basic and acidic residues-rich tracts occupy residues 597–610 (KASEADKQAADPKS), 617–635 (RKELQRKAKEEAEDLERAK), and 654–664 (NKKDAESEKLR). Residues 609 to 680 (KSKAKQQKRK…ERKMAKGKAT (72 aa)) are a coiled coil. Basic residues predominate over residues 665 to 680 (EKRRRIERKMAKGKAT).

It belongs to the pescadillo family. Component of the NOP7 complex, composed of ERB1, NOP7 and YTM1. The complex is held together by ERB1, which interacts with NOP7 via its N-terminal domain and with YTM1 via a high-affinity interaction between the seven-bladed beta-propeller domains of the 2 proteins. The NOP7 complex associates with the 66S pre-ribosome.

It is found in the nucleus. It localises to the nucleolus. The protein localises to the nucleoplasm. In terms of biological role, component of the NOP7 complex, which is required for maturation of the 25S and 5.8S ribosomal RNAs and formation of the 60S ribosome. In Pyricularia oryzae (strain 70-15 / ATCC MYA-4617 / FGSC 8958) (Rice blast fungus), this protein is Pescadillo homolog.